The sequence spans 347 residues: Zinc-type alcohol dehydrogenase-like protein C16A3.02c (347 aa).

The protein belongs to the zinc-containing alcohol dehydrogenase family. Quinone oxidoreductase subfamily.

Its subcellular location is the golgi apparatus. The protein resides in the endoplasmic reticulum. This chain is Zinc-type alcohol dehydrogenase-like protein C16A3.02c, found in Schizosaccharomyces pombe (strain 972 / ATCC 24843) (Fission yeast).